Here is a 457-residue protein sequence, read N- to C-terminus: Probable ECA polymerase (457 aa).

The next 11 helical transmembrane spans lie at 3-23 (LLQF…ILTL), 41-61 (MLFL…VFGF), 65-85 (VVPA…YAIY), 118-138 (IMAL…GFLL), 154-174 (GVAL…VYFL), 181-201 (WLLF…IVGG), 206-226 (IIIA…ITLW), 227-247 (MLAL…LKRY), 340-360 (LVVM…GLII), 377-397 (YKAA…IVLA), and 408-428 (VVFF…LYWL).

It belongs to the WzyE family. In terms of assembly, probably part of a complex composed of WzxE, WzyE and WzzE.

It localises to the cell inner membrane. The protein operates within bacterial outer membrane biogenesis; enterobacterial common antigen biosynthesis. In terms of biological role, probably involved in the polymerization of enterobacterial common antigen (ECA) trisaccharide repeat units. The polypeptide is Probable ECA polymerase (Erwinia tasmaniensis (strain DSM 17950 / CFBP 7177 / CIP 109463 / NCPPB 4357 / Et1/99)).